The chain runs to 173 residues: Probable DNA-directed RNA polymerase subunit delta (173 aa).

One can recognise an HTH HARE-type domain in the interval 14–81; it reads NSFIDLAYMA…GEYMWGLRDW (68 aa). Residues 113-173 are disordered; sequence LLGEDEVEDE…DEFDDEEEEE (61 aa). The span at 115–173 shows a compositional bias: acidic residues; the sequence is GEDEVEDELDLLPSDGDEENVDTEDEEVEDELDEAGLVVEPDEEFEDEEDEFDDEEEEE.

Belongs to the RpoE family. RNAP is composed of a core of 2 alpha, a beta and a beta' subunits. The core is associated with a delta subunit and one of several sigma factors.

Its function is as follows. Participates in both the initiation and recycling phases of transcription. In the presence of the delta subunit, RNAP displays an increased specificity of transcription, a decreased affinity for nucleic acids, and an increased efficiency of RNA synthesis because of enhanced recycling. The sequence is that of Probable DNA-directed RNA polymerase subunit delta from Macrococcus caseolyticus (strain JCSC5402) (Macrococcoides caseolyticum).